The chain runs to 74 residues: MLVLSRKANESIMIGKDIEIKVLGIEDGKVKIGIDAPRGLEIYRREIYVEIEEENITASKQNLNLENLKILFKK.

It belongs to the CsrA/RsmA family. As to quaternary structure, homodimer; the beta-strands of each monomer intercalate to form a hydrophobic core, while the alpha-helices form wings that extend away from the core.

It localises to the cytoplasm. In terms of biological role, a translational regulator that binds mRNA to regulate translation initiation and/or mRNA stability. Usually binds in the 5'-UTR at or near the Shine-Dalgarno sequence preventing ribosome-binding, thus repressing translation. Its main target seems to be the major flagellin gene, while its function is anatagonized by FliW. The sequence is that of Translational regulator CsrA from Alkaliphilus oremlandii (strain OhILAs) (Clostridium oremlandii (strain OhILAs)).